Here is a 264-residue protein sequence, read N- to C-terminus: Carbohydrate deacetylase (264 aa).

The active-site Proton acceptor is the Asp20. Mg(2+) is bound by residues Asp21, His60, and His127. His215 functions as the Proton donor in the catalytic mechanism.

This sequence belongs to the YdjC deacetylase family. Homodimer. Mg(2+) serves as cofactor.

Functionally, probably catalyzes the deacetylation of acetylated carbohydrates an important step in the degradation of oligosaccharides. The chain is Carbohydrate deacetylase from Thermus thermophilus (strain ATCC 27634 / DSM 579 / HB8).